We begin with the raw amino-acid sequence, 398 residues long: MNYNKKSIEDIDVKGKKVLVRCDFNVPLNEGKITDENRLVGALPTIKYLMGKGAKIILCSHMGKPKGEPKKELSLLPVAKRLSEMLNKEVIFADDDNVVGENAKKAVEDMKDGDVVLLQNTRYRKEETKNEEVFSKELASLADVFVNDAFGTAHRAHCSTVGVTNYLKEAACGYLIQKELKFLGNAVEKPERPFVAILGGAKVSDKINVINNLLDKVDTLIIGGGMGYTFLKAQGYTIGNSLVEEDKVEYSKEMIDKAKEKGVNLLLPIDNVVADKFDKDASPVVTEDQNIGEGYMGLDIGPKTAKIYSDAIKSAKTVVWNGPMGVFEFKSFANGTIEVAKAMADSDAVTIIGGGDSAAAVNILGFGDKMTHISTGGGASLEFLEGKELPGIAALNDK.

Residues 23-25 (DFN), arginine 38, 61-64 (HMGK), arginine 122, and arginine 155 contribute to the substrate site. ATP contacts are provided by residues lysine 206, glycine 297, glutamate 328, and 354–357 (GGDS).

The protein belongs to the phosphoglycerate kinase family. As to quaternary structure, monomer.

The protein resides in the cytoplasm. It carries out the reaction (2R)-3-phosphoglycerate + ATP = (2R)-3-phospho-glyceroyl phosphate + ADP. Its pathway is carbohydrate degradation; glycolysis; pyruvate from D-glyceraldehyde 3-phosphate: step 2/5. In Clostridium botulinum (strain Langeland / NCTC 10281 / Type F), this protein is Phosphoglycerate kinase.